We begin with the raw amino-acid sequence, 351 residues long: Peptidyl-Lys metalloendopeptidase (351 aa).

The signal sequence occupies residues 1-22 (MFSLSSRFFLYSLCLSAVAVSA). A propeptide spanning residues 23–183 (APGLSLSLSG…VARRSNLGKR (161 aa)) is cleaved from the precursor. 2 disulfides stabilise this stretch: C189/C259 and C261/C281. H301 is a Zn(2+) binding site. Residue E302 is part of the active site. Zn(2+) is bound by residues H305 and D314.

This sequence belongs to the peptidase M35 family. Requires Zn(2+) as cofactor.

The protein resides in the secreted. The catalysed reaction is Preferential cleavage in proteins: -Xaa-|-Lys- (in which Xaa may be Pro).. With respect to regulation, inhibited by chelating agents such as imidazole, alpha,alpha'-bipyridine, and 1,10-phenanthroline. In Armillaria mellea (Honey mushroom), this protein is Peptidyl-Lys metalloendopeptidase (MEP).